Here is a 425-residue protein sequence, read N- to C-terminus: Succinate--CoA ligase [ADP-forming] subunit beta, mitochondrial (425 aa).

A mitochondrion-targeting transit peptide spans 1 to 14 (NNHGLQIQQQQQRN). The region spanning 23 to 250 (MELLQEAGVS…SNSAYRQKKI (228 aa)) is the ATP-grasp domain. Lys-40 bears the N6-acetyllysine mark. A Phosphotyrosine modification is found at Tyr-46. Residue Lys-50 is modified to N6-acetyllysine; alternate. N6-succinyllysine; alternate is present on Lys-50. Residues Lys-60 and 67–69 (GRG) each bind ATP. Residues Lys-91, Lys-101, Lys-105, and Lys-178 each carry the N6-acetyllysine modification. Positions 220 and 234 each coordinate Mg(2+). Ser-241 carries the phosphoserine modification. Asn-285 serves as a coordination point for substrate. The residue at position 303 (Thr-303) is a Phosphothreonine. Lys-330 carries the post-translational modification N6-acetyllysine. 342 to 344 (GIM) contributes to the substrate binding site. Lys-400 bears the N6-acetyllysine mark.

Belongs to the succinate/malate CoA ligase beta subunit family. ATP-specific subunit beta subfamily. As to quaternary structure, heterodimer of an alpha and a beta subunit. The beta subunit determines specificity for ATP. Interacts with ALAS2. Requires Mg(2+) as cofactor.

It is found in the mitochondrion. It catalyses the reaction succinate + ATP + CoA = succinyl-CoA + ADP + phosphate. It functions in the pathway carbohydrate metabolism; tricarboxylic acid cycle; succinate from succinyl-CoA (ligase route): step 1/1. Functionally, ATP-specific succinyl-CoA synthetase functions in the citric acid cycle (TCA), coupling the hydrolysis of succinyl-CoA to the synthesis of ATP and thus represents the only step of substrate-level phosphorylation in the TCA. The beta subunit provides nucleotide specificity of the enzyme and binds the substrate succinate, while the binding sites for coenzyme A and phosphate are found in the alpha subunit. In Sus scrofa (Pig), this protein is Succinate--CoA ligase [ADP-forming] subunit beta, mitochondrial.